A 440-amino-acid polypeptide reads, in one-letter code: Light-independent protochlorophyllide reductase subunit B (440 aa).

D36 contributes to the [4Fe-4S] cluster binding site. Position 427–428 (427–428 (KD)) interacts with substrate.

The protein belongs to the ChlB/BchB/BchZ family. As to quaternary structure, protochlorophyllide reductase is composed of three subunits; ChlL, ChlN and ChlB. Forms a heterotetramer of two ChlB and two ChlN subunits. [4Fe-4S] cluster serves as cofactor.

Its subcellular location is the plastid. The protein resides in the cyanelle. It catalyses the reaction chlorophyllide a + oxidized 2[4Fe-4S]-[ferredoxin] + 2 ADP + 2 phosphate = protochlorophyllide a + reduced 2[4Fe-4S]-[ferredoxin] + 2 ATP + 2 H2O. The protein operates within porphyrin-containing compound metabolism; chlorophyll biosynthesis (light-independent). In terms of biological role, component of the dark-operative protochlorophyllide reductase (DPOR) that uses Mg-ATP and reduced ferredoxin to reduce ring D of protochlorophyllide (Pchlide) to form chlorophyllide a (Chlide). This reaction is light-independent. The NB-protein (ChlN-ChlB) is the catalytic component of the complex. This is Light-independent protochlorophyllide reductase subunit B from Cyanophora paradoxa.